Here is a 184-residue protein sequence, read N- to C-terminus: Mediator of RNA polymerase II transcription subunit 30 (184 aa).

Residues S136–M179 adopt a coiled-coil conformation.

This sequence belongs to the Mediator complex subunit 30 family. In terms of assembly, component of the Mediator complex.

It is found in the nucleus. Its function is as follows. Component of the Mediator complex, a coactivator involved in the regulated transcription of nearly all RNA polymerase II-dependent genes. Mediator functions as a bridge to convey information from gene-specific regulatory proteins to the basal RNA polymerase II transcription machinery. Mediator is recruited to promoters by direct interactions with regulatory proteins and serves as a scaffold for the assembly of a functional preinitiation complex with RNA polymerase II and the general transcription factors. The chain is Mediator of RNA polymerase II transcription subunit 30 (med30) from Xenopus laevis (African clawed frog).